The following is a 76-amino-acid chain: Omega-conotoxin-like TeAr94 (76 aa).

Positions 1-22 are cleaved as a signal peptide; sequence MKLTCMMIVAVLFLTAWTFVTA. The propeptide occupies 23 to 50; sequence VPHSSNALENLYLKAHHEMNNPEDSELN. 3 disulfide bridges follow: cysteine 53–cysteine 67, cysteine 60–cysteine 71, and cysteine 66–cysteine 75.

The protein belongs to the conotoxin O1 superfamily. As to expression, expressed by the venom duct.

The protein localises to the secreted. In terms of biological role, omega-conotoxins act at presynaptic membranes, they bind and block voltage-gated calcium channels. The protein is Omega-conotoxin-like TeAr94 of Conus textile (Cloth-of-gold cone).